Reading from the N-terminus, the 110-residue chain is Guanine nucleotide-binding protein subunit gamma (110 aa).

A lipid anchor (S-palmitoyl cysteine) is attached at cysteine 106. At cysteine 107 the chain carries Cysteine methyl ester. Cysteine 107 is lipidated: S-farnesyl cysteine. The propeptide at 108-110 (TLM) is removed in mature form.

This sequence belongs to the G protein gamma family. In terms of assembly, g proteins are composed of 3 units, alpha, beta and gamma. The beta-gamma subunit complex (STE4-STE18 complex) interacts with PLP1 and PLP2.

It is found in the membrane. In terms of biological role, implicated in the pheromone A- and alpha-factor response pathway. The beta and gamma chains of the putative yeast mating response pathway G protein play a positive role in initiation of the mating response. The chain is Guanine nucleotide-binding protein subunit gamma (STE18) from Saccharomyces cerevisiae (strain ATCC 204508 / S288c) (Baker's yeast).